A 466-amino-acid polypeptide reads, in one-letter code: Histidine--tRNA ligase (466 aa).

The protein belongs to the class-II aminoacyl-tRNA synthetase family. Homodimer.

It is found in the cytoplasm. It catalyses the reaction tRNA(His) + L-histidine + ATP = L-histidyl-tRNA(His) + AMP + diphosphate + H(+). This chain is Histidine--tRNA ligase, found in Bifidobacterium animalis subsp. lactis (strain AD011).